A 285-amino-acid polypeptide reads, in one-letter code: CCR4-NOT transcription complex subunit 7 (285 aa).

Residues Asp-40, Glu-42, Asp-161, Asp-230, and Glu-278 each coordinate a divalent metal cation.

The protein belongs to the CAF1 family. Component of the CCR4-NOT complex. Mn(2+) serves as cofactor. It depends on Mg(2+) as a cofactor. Co(2+) is required as a cofactor.

It localises to the nucleus. The protein localises to the cytoplasm. It catalyses the reaction Exonucleolytic cleavage of poly(A) to 5'-AMP.. Functionally, has 3'-5' poly(A) exoribonuclease activity for synthetic poly(A) RNA substrate. Catalytic component of the CCR4-NOT complex which is one of the major cellular mRNA deadenylases and is linked to various cellular processes including bulk mRNA degradation, miRNA-mediated repression, translational repression during translational initiation and general transcription regulation. During miRNA-mediated repression the complex also seems to act as translational repressor during translational initiation. Additional complex functions may be a consequence of its influence on mRNA expression. The polypeptide is CCR4-NOT transcription complex subunit 7 (cnot7) (Xenopus laevis (African clawed frog)).